Here is a 239-residue protein sequence, read N- to C-terminus: Ribosome assembly factor mrt4 (239 aa).

Belongs to the universal ribosomal protein uL10 family. Associates with the pre-60S ribosomal particle.

It localises to the nucleus. It is found in the nucleolus. The protein localises to the cytoplasm. Its function is as follows. Component of the ribosome assembly machinery. Nuclear paralog of the ribosomal protein P0, it binds pre-60S subunits at an early stage of assembly in the nucleolus, and is replaced by P0 in cytoplasmic pre-60S subunits and mature 80S ribosomes. The polypeptide is Ribosome assembly factor mrt4 (Candida glabrata (strain ATCC 2001 / BCRC 20586 / JCM 3761 / NBRC 0622 / NRRL Y-65 / CBS 138) (Yeast)).